Here is a 241-residue protein sequence, read N- to C-terminus: Probable transcriptional regulatory protein azo0574 (241 aa).

The segment at 1 to 21 (MAGHSKWANIQHRKGRQDAKR) is disordered.

The protein belongs to the TACO1 family.

It localises to the cytoplasm. The sequence is that of Probable transcriptional regulatory protein azo0574 from Azoarcus sp. (strain BH72).